Consider the following 82-residue polypeptide: U17-hexatoxin-Hi1a (82 aa).

The first 21 residues, 1–21, serve as a signal peptide directing secretion; that stretch reads MKTIFAVTLLLFAIYVPECMP. Cystine bridges form between cysteine 22-cysteine 33, cysteine 27-cysteine 48, cysteine 32-cysteine 61, cysteine 58-cysteine 69, and cysteine 63-cysteine 75.

In terms of tissue distribution, expressed by the venom gland.

It localises to the secreted. Its function is as follows. Probable ion channel inhibitor. In Hadronyche infensa (Fraser island funnel-web spider), this protein is U17-hexatoxin-Hi1a.